A 240-amino-acid polypeptide reads, in one-letter code: Probable transcriptional regulatory protein OEOE_0768 (240 aa).

Positions 1-21 are disordered; it reads MSGHSKWHNIQGRKNAQDAKR.

It belongs to the TACO1 family.

It localises to the cytoplasm. The chain is Probable transcriptional regulatory protein OEOE_0768 from Oenococcus oeni (strain ATCC BAA-331 / PSU-1).